Reading from the N-terminus, the 224-residue chain is Heme response regulator HssR (224 aa).

In terms of domain architecture, Response regulatory spans 3-116 (TCLIVDDDPK…ELMFRIKAVL (114 aa)). 4-aspartylphosphate is present on Asp52. The segment at residues 124-222 (NNEVSIGNLT…VRGLGYKVDD (99 aa)) is a DNA-binding region (ompR/PhoB-type).

Phosphorylated by HssS.

The protein localises to the cytoplasm. Its function is as follows. Member of the two-component regulatory system HssS/HssR involved in intracellular heme homeostasis and tempering of staphylococcal virulence. Phosphorylated HssR binds to a direct repeat sequence within hrtAB promoter and activates the expression of hrtAB, an efflux pump, in response to extracellular heme, hemin, hemoglobin or blood. This Staphylococcus saprophyticus subsp. saprophyticus (strain ATCC 15305 / DSM 20229 / NCIMB 8711 / NCTC 7292 / S-41) protein is Heme response regulator HssR (hssR).